A 139-amino-acid chain; its full sequence is Small ribosomal subunit protein uS11 (139 aa).

Residues 1–33 are disordered; it reads MPPAKKGPATSARKGQKTRRREKKNVPHGAAHI. Residues 14 to 23 are compositionally biased toward basic residues; that stretch reads KGQKTRRREK.

This sequence belongs to the universal ribosomal protein uS11 family. Part of the 30S ribosomal subunit. Interacts with proteins S7 and S18. Binds to IF-3.

Its function is as follows. Located on the platform of the 30S subunit, it bridges several disparate RNA helices of the 16S rRNA. Forms part of the Shine-Dalgarno cleft in the 70S ribosome. This is Small ribosomal subunit protein uS11 from Mycobacterium bovis (strain ATCC BAA-935 / AF2122/97).